The sequence spans 259 residues: Probable UMP-CMP kinase 2 (259 aa).

63–68 (GSGKGT) provides a ligand contact to ATP. Positions 83-112 (SAGDLLRREIAMHTENGAMILNLIKDGKIV) are NMP. A ribonucleoside 5'-phosphate is bound by residues Arg89, 110–112 (KIV), and 137–140 (GFPR). Position 144 (Asn144) interacts with CMP. The interval 175 to 183 (NRNQGRIDD) is LID. Arg176 provides a ligand contact to ATP. The a ribonucleoside 5'-phosphate site is built by Arg180 and Arg191. Gly219 is an ATP binding site.

It belongs to the adenylate kinase family. UMP-CMP kinase subfamily. In terms of assembly, monomer. It depends on Mg(2+) as a cofactor.

It is found in the cytoplasm. The protein resides in the nucleus. The enzyme catalyses CMP + ATP = CDP + ADP. The catalysed reaction is dCMP + ATP = dCDP + ADP. It carries out the reaction UMP + ATP = UDP + ADP. Catalyzes the phosphorylation of pyrimidine nucleoside monophosphates at the expense of ATP. Plays an important role in de novo pyrimidine nucleotide biosynthesis. Has preference for UMP and CMP as phosphate acceptors. The protein is Probable UMP-CMP kinase 2 (UMK2) of Arabidopsis thaliana (Mouse-ear cress).